The following is a 146-amino-acid chain: Hemoglobin cathodic subunit beta (146 aa).

In terms of domain architecture, Globin spans 2 to 146 (EWSASERSTI…VVSALSKQYF (145 aa)). Heme b is bound by residues histidine 63 and histidine 92.

It belongs to the globin family. Heterotetramer of two alpha chains and two beta chains. Red blood cells.

Functionally, involved in oxygen transport from gills to the various peripheral tissues. In Anguilla anguilla (European freshwater eel), this protein is Hemoglobin cathodic subunit beta (hbb2).